The primary structure comprises 154 residues: Transcriptional repressor NrdR (154 aa).

Residues 3 to 34 (CPTCKYNGTRVVDSRPADDGNSIRRRRECEKC) fold into a zinc finger. The ATP-cone domain maps to 49–139 (LIVVKKDGAR…VYRQFKDISV (91 aa)).

It belongs to the NrdR family. It depends on Zn(2+) as a cofactor.

Functionally, negatively regulates transcription of bacterial ribonucleotide reductase nrd genes and operons by binding to NrdR-boxes. This is Transcriptional repressor NrdR from Listeria innocua serovar 6a (strain ATCC BAA-680 / CLIP 11262).